The chain runs to 428 residues: Adenylosuccinate synthetase (428 aa).

GTP contacts are provided by residues 12–18 (GDEGKGK) and 40–42 (GHT). Catalysis depends on Asp13, which acts as the Proton acceptor. 2 residues coordinate Mg(2+): Asp13 and Gly40. Residues 13-16 (DEGK), 38-41 (NAGH), Thr129, Arg143, Gln224, Thr239, and Arg303 each bind IMP. His41 serves as the catalytic Proton donor. 299 to 305 (VTTGRIR) lines the substrate pocket. Residues Arg305, 331-333 (KVD), and 410-412 (AYG) contribute to the GTP site.

It belongs to the adenylosuccinate synthetase family. In terms of assembly, homodimer. Mg(2+) serves as cofactor.

The protein resides in the cytoplasm. The enzyme catalyses IMP + L-aspartate + GTP = N(6)-(1,2-dicarboxyethyl)-AMP + GDP + phosphate + 2 H(+). It functions in the pathway purine metabolism; AMP biosynthesis via de novo pathway; AMP from IMP: step 1/2. Functionally, plays an important role in the de novo pathway of purine nucleotide biosynthesis. Catalyzes the first committed step in the biosynthesis of AMP from IMP. This is Adenylosuccinate synthetase from Francisella tularensis subsp. holarctica (strain FTNF002-00 / FTA).